We begin with the raw amino-acid sequence, 189 residues long: Ribonuclease M5 (189 aa).

The 84-residue stretch at 8–91 (KEIIVVEGKD…AFLPKEEALA (84 aa)) folds into the Toprim domain. The Mg(2+) site is built by Glu14, Asp60, and Asp62.

It belongs to the ribonuclease M5 family. The cofactor is Mg(2+).

It localises to the cytoplasm. It carries out the reaction Endonucleolytic cleavage of RNA, removing 21 and 42 nucleotides, respectively, from the 5'- and 3'-termini of a 5S-rRNA precursor.. Its function is as follows. Required for correct processing of both the 5' and 3' ends of 5S rRNA precursor. Cleaves both sides of a double-stranded region yielding mature 5S rRNA in one step. This is Ribonuclease M5 from Bacillus cereus (strain ATCC 14579 / DSM 31 / CCUG 7414 / JCM 2152 / NBRC 15305 / NCIMB 9373 / NCTC 2599 / NRRL B-3711).